The sequence spans 988 residues: Protein SEMI-ROLLED LEAF 2 (988 aa).

Positions 844 to 865 (SVDGGLHESPITNTGSSISKTT) are disordered. Over residues 853–865 (PITNTGSSISKTT) the composition is skewed to polar residues.

Expressed in root tips, and in the vascular bundles of leaf blades, leaf sheaths, and roots, especially in their sclerenchymatous cells.

The protein localises to the nucleus. It localises to the cytoplasm. Functions in regulating leaf rolling through abaxial side leaf cell differentiation. May be involved in the transdifferentiation process from mesophyll cells to sclerenchymatous cells. The polypeptide is Protein SEMI-ROLLED LEAF 2 (Oryza sativa subsp. japonica (Rice)).